Reading from the N-terminus, the 49-residue chain is Light-harvesting protein B800/850/890 alpha-3 chain (49 aa).

At 1-14 (MNQARIWLVVKPSV) the chain is on the cytoplasmic side. A helical membrane pass occupies residues 15–35 (GLPLLLGVVLLIALLVHGAIL). H31 lines the a bacteriochlorophyll pocket. The Periplasmic portion of the chain corresponds to 36–49 (TNTSWYPTYFEGNW).

The protein belongs to the antenna complex alpha subunit family. As to quaternary structure, the core complex is formed by different alpha and beta chains, binding bacteriochlorophyll molecules, and arranged most probably in tetrameric structures disposed around the reaction center. The non-pigmented gamma chains may constitute additional components.

Its subcellular location is the cell inner membrane. Its function is as follows. Antenna complexes are light-harvesting systems, which transfer the excitation energy to the reaction centers. This Halorhodospira halophila (strain DSM 244 / SL1) (Ectothiorhodospira halophila (strain DSM 244 / SL1)) protein is Light-harvesting protein B800/850/890 alpha-3 chain.